The primary structure comprises 554 residues: Glutamine--tRNA ligase (554 aa).

The 'HIGH' region signature appears at proline 34–histidine 44. ATP-binding positions include glutamate 35 to asparagine 37 and histidine 41 to serine 47. Residues aspartate 67 and tyrosine 212 each coordinate L-glutamine. Residues threonine 231, arginine 261 to leucine 262, and methionine 269 to lysine 271 contribute to the ATP site. The 'KMSKS' region motif lies at isoleucine 268–arginine 272.

The protein belongs to the class-I aminoacyl-tRNA synthetase family. Monomer.

Its subcellular location is the cytoplasm. The catalysed reaction is tRNA(Gln) + L-glutamine + ATP = L-glutaminyl-tRNA(Gln) + AMP + diphosphate. This Serratia proteamaculans (strain 568) protein is Glutamine--tRNA ligase.